The chain runs to 218 residues: N-(5'-phosphoribosyl)anthranilate isomerase (218 aa).

It belongs to the TrpF family.

It catalyses the reaction N-(5-phospho-beta-D-ribosyl)anthranilate = 1-(2-carboxyphenylamino)-1-deoxy-D-ribulose 5-phosphate. The protein operates within amino-acid biosynthesis; L-tryptophan biosynthesis; L-tryptophan from chorismate: step 3/5. This Rhodospirillum rubrum (strain ATCC 11170 / ATH 1.1.1 / DSM 467 / LMG 4362 / NCIMB 8255 / S1) protein is N-(5'-phosphoribosyl)anthranilate isomerase.